The primary structure comprises 91 residues: Small ribosomal subunit protein uS19 (91 aa).

It belongs to the universal ribosomal protein uS19 family.

Protein S19 forms a complex with S13 that binds strongly to the 16S ribosomal RNA. This chain is Small ribosomal subunit protein uS19 (rpsS), found in Mycoplasmopsis pulmonis (strain UAB CTIP) (Mycoplasma pulmonis).